Reading from the N-terminus, the 144-residue chain is D-aminoacyl-tRNA deacylase (144 aa).

The Gly-cisPro motif, important for rejection of L-amino acids motif lies at 136–137 (GP).

It belongs to the DTD family. In terms of assembly, homodimer.

It is found in the cytoplasm. The enzyme catalyses glycyl-tRNA(Ala) + H2O = tRNA(Ala) + glycine + H(+). It carries out the reaction a D-aminoacyl-tRNA + H2O = a tRNA + a D-alpha-amino acid + H(+). In terms of biological role, an aminoacyl-tRNA editing enzyme that deacylates mischarged D-aminoacyl-tRNAs. Also deacylates mischarged glycyl-tRNA(Ala), protecting cells against glycine mischarging by AlaRS. Acts via tRNA-based rather than protein-based catalysis; rejects L-amino acids rather than detecting D-amino acids in the active site. By recycling D-aminoacyl-tRNA to D-amino acids and free tRNA molecules, this enzyme counteracts the toxicity associated with the formation of D-aminoacyl-tRNA entities in vivo and helps enforce protein L-homochirality. The polypeptide is D-aminoacyl-tRNA deacylase (Haemophilus influenzae (strain 86-028NP)).